We begin with the raw amino-acid sequence, 787 residues long: DNA ligase (787 aa).

NAD(+) contacts are provided by residues 32–36 (DAEYD), 81–82 (SL), and glutamate 121. The active-site N6-AMP-lysine intermediate is the lysine 123. Positions 144, 181, 297, and 321 each coordinate NAD(+). Residues cysteine 415, cysteine 418, cysteine 445, and cysteine 451 each contribute to the Zn(2+) site. A BRCT domain is found at 703–787 (VEGLPLAGQT…RLTELGVAVD (85 aa)).

The protein belongs to the NAD-dependent DNA ligase family. LigA subfamily. Mg(2+) is required as a cofactor. Mn(2+) serves as cofactor.

It carries out the reaction NAD(+) + (deoxyribonucleotide)n-3'-hydroxyl + 5'-phospho-(deoxyribonucleotide)m = (deoxyribonucleotide)n+m + AMP + beta-nicotinamide D-nucleotide.. Functionally, DNA ligase that catalyzes the formation of phosphodiester linkages between 5'-phosphoryl and 3'-hydroxyl groups in double-stranded DNA using NAD as a coenzyme and as the energy source for the reaction. It is essential for DNA replication and repair of damaged DNA. The protein is DNA ligase of Pseudomonas syringae pv. tomato (strain ATCC BAA-871 / DC3000).